The chain runs to 534 residues: CTP synthase (534 aa).

Residues 1–267 (MTKYIFVTGG…DQIVCDHLKL (267 aa)) form an amidoligase domain region. Serine 13 provides a ligand contact to CTP. Serine 13 contributes to the UTP binding site. 14-19 (SIGKGI) serves as a coordination point for ATP. Tyrosine 54 contributes to the L-glutamine binding site. Aspartate 71 lines the ATP pocket. Mg(2+) contacts are provided by aspartate 71 and glutamate 141. CTP is bound by residues 148–150 (DIE), 188–193 (KTKPTQ), and lysine 224. UTP is bound by residues 188-193 (KTKPTQ) and lysine 224. The Glutamine amidotransferase type-1 domain maps to 292–534 (KIALVGKYVE…FVTAAVENAK (243 aa)). Glycine 354 serves as a coordination point for L-glutamine. The active-site Nucleophile; for glutamine hydrolysis is the cysteine 381. L-glutamine contacts are provided by residues 382–385 (LGMQ), glutamate 405, and arginine 463. Residues histidine 508 and glutamate 510 contribute to the active site.

Belongs to the CTP synthase family. In terms of assembly, homotetramer.

The catalysed reaction is UTP + L-glutamine + ATP + H2O = CTP + L-glutamate + ADP + phosphate + 2 H(+). It carries out the reaction L-glutamine + H2O = L-glutamate + NH4(+). The enzyme catalyses UTP + NH4(+) + ATP = CTP + ADP + phosphate + 2 H(+). It participates in pyrimidine metabolism; CTP biosynthesis via de novo pathway; CTP from UDP: step 2/2. Its activity is regulated as follows. Allosterically activated by GTP, when glutamine is the substrate; GTP has no effect on the reaction when ammonia is the substrate. The allosteric effector GTP functions by stabilizing the protein conformation that binds the tetrahedral intermediate(s) formed during glutamine hydrolysis. Inhibited by the product CTP, via allosteric rather than competitive inhibition. In terms of biological role, catalyzes the ATP-dependent amination of UTP to CTP with either L-glutamine or ammonia as the source of nitrogen. Regulates intracellular CTP levels through interactions with the four ribonucleotide triphosphates. This is CTP synthase from Streptococcus thermophilus (strain ATCC BAA-250 / LMG 18311).